The primary structure comprises 491 residues: Glutamyl-tRNA(Gln) amidotransferase subunit A (491 aa).

Residues lysine 79 and serine 158 each act as charge relay system in the active site. Serine 182 (acyl-ester intermediate) is an active-site residue.

The protein belongs to the amidase family. GatA subfamily. In terms of assembly, heterotrimer of A, B and C subunits.

It carries out the reaction L-glutamyl-tRNA(Gln) + L-glutamine + ATP + H2O = L-glutaminyl-tRNA(Gln) + L-glutamate + ADP + phosphate + H(+). Functionally, allows the formation of correctly charged Gln-tRNA(Gln) through the transamidation of misacylated Glu-tRNA(Gln) in organisms which lack glutaminyl-tRNA synthetase. The reaction takes place in the presence of glutamine and ATP through an activated gamma-phospho-Glu-tRNA(Gln). This chain is Glutamyl-tRNA(Gln) amidotransferase subunit A, found in Maricaulis maris (strain MCS10) (Caulobacter maris).